Reading from the N-terminus, the 131-residue chain is Glycine cleavage system H protein (131 aa).

Residues 24 to 106 form the Lipoyl-binding domain; that stretch reads RVTVGISDHA…YGEGWIFVVE (83 aa). Lys-65 is modified (N6-lipoyllysine).

It belongs to the GcvH family. In terms of assembly, the glycine cleavage system is composed of four proteins: P, T, L and H. The cofactor is (R)-lipoate.

Functionally, the glycine cleavage system catalyzes the degradation of glycine. The H protein shuttles the methylamine group of glycine from the P protein to the T protein. The polypeptide is Glycine cleavage system H protein (Xanthomonas campestris pv. campestris (strain 8004)).